We begin with the raw amino-acid sequence, 110 residues long: Small ribosomal subunit protein uS10 (110 aa).

It belongs to the universal ribosomal protein uS10 family. Part of the 30S ribosomal subunit.

Functionally, involved in the binding of tRNA to the ribosomes. The polypeptide is Small ribosomal subunit protein uS10 (Ehrlichia ruminantium (strain Gardel)).